The chain runs to 308 residues: Putative S-adenosyl-L-methionine-dependent methyltransferase Mjls_1073 (308 aa).

S-adenosyl-L-methionine contacts are provided by residues Asp133 and 162-163 (DL).

Belongs to the UPF0677 family.

Exhibits S-adenosyl-L-methionine-dependent methyltransferase activity. The chain is Putative S-adenosyl-L-methionine-dependent methyltransferase Mjls_1073 from Mycobacterium sp. (strain JLS).